Consider the following 143-residue polypeptide: MAKKITAYIKLQVKAAQANPSPPVGPALGQHGVNIMEFCKAFNARTQGLEPGLPTPVIITVYSDRSFTFETKSTPASVLLKKAAGLTSGSARPNTVKVGTVTRAQLEEIAKTKNADLTAADMDAAVRTIAGSARSMGLNVEGV.

The protein belongs to the universal ribosomal protein uL11 family. In terms of assembly, part of the ribosomal stalk of the 50S ribosomal subunit. Interacts with L10 and the large rRNA to form the base of the stalk. L10 forms an elongated spine to which L12 dimers bind in a sequential fashion forming a multimeric L10(L12)X complex. In terms of processing, one or more lysine residues are methylated.

Functionally, forms part of the ribosomal stalk which helps the ribosome interact with GTP-bound translation factors. The polypeptide is Large ribosomal subunit protein uL11 (Pseudomonas fluorescens (strain SBW25)).